Here is a 1714-residue protein sequence, read N- to C-terminus: MSANAAWDDSDSENENVVVEEKPVILPRARQPSIAKSLEKVQILENSVAGSEKNASDDDSDASSVMSDDLESLGETTEVLNFSLEQLSMMKKNLAQFPCSYKNIISEFADVEIFLISIDSLIVECAAHSYHNWDVAGQSMVLNKQIDRFLQQFVDIGGRFKLVVFSDLTTQFAKDTTLSFARSTALAHLANGPHARDLLFFTNPTDPEWDKLLNDLTPSFLMISTDNVTQNVCASQEIDLTKQFETIAFDVLTRSMSVVLLHSIKVNFVSVEAYYIQPLLVVAPDWQAFLAAHWDNNGTLLRNHLSKEIKFNQFETPADLWVKVITDAKATGKGSDTFDTLAAAVILSSLICSRRGAHRIYYPTRTDAKRGLNVIRDRRLILNAAVVLLDKADHANSKLDLSDLWDGRMVYSIFDELSANETVLPYRLQDDFAKYHQKAGLTVPLATDTNEKLFDPIPEITDPLVDLPILYSVTSPMIKRFVPEIEKMTSQNAVEEGTVQDYADYLKDTSQWRLKPIEETYAQKEEKIEDAWQLKKANRSKQFLMRWYELFANSLEGRGSNLLVDFSRVPKGYAVVEEEVTDEKKTGKGGWSGQKQQKPGAGGKKGATKESGKSKKDLILEANKKAKDQKVAESEKVKIKYGCQQGKESVIFLNNLYSSLDLPETRALCVYEIAVREGRTIFDQHQGTDKQEVRRNAAIDLVGHLKDCFVKHWDHLESKQKEQIVDLWVSLGFEAPAGSKPSSEAKQKKLNLGINMVYYQLQYGGELIDIQSDPKKDDRVSGFAPDGWQRKMLDSVDRGNSALIIAPTSAGKTFVSYYCIEKVLRSSDNDVVVYVAPSKALINQVCGSVYARFRNKSMKRGISLFGTLTQEYSQNAMQCQVLITVPECLQELMLSRTPAVQKFVSHIKYVVFDEVHSIGASEESHIWEQLLLLIQCPFLALSATIGNANKLHEWLNSSEQAKSAGKRKVELINYGERYSELELSILNINDPHGEDDGAVHKKAGERAVIPLMPYGVYMPEKLRMFSIPEDQQLTARQVLHLYNMMAEVDDATKKEFEPCKFFGQHGTKAVWISRSELRRLENALKERFMEWLSSDEQKINSILKILKEPVNTQLSYRARPFNKEKIANDYIVTLVDDLKEKGELPAICFNDDRHVCEKLAVTLANELERRELEYMETDEFKNKYMIKDESKLVKLAKRKRDDAEKKKKGDKDEDAGPEKDDDEMDVLAMKKAKLARALERFKLRGRNGGDPDIYAKMVERMQKGAKTRESTQVLLKLFERGIGYHHAGLNTVERGAVEVLFRSGNLAVLFSTSTLSLGVNMPCKTVMFGVDTLQLTPLLYRQMSGRAGRRGFDHSGNVIFMSIPTSKVRRLLTASLSNLQGNPPFTVLFLLRLFAYVHQQDILNEEGQKVSTMKQRAFAAKSLLEHSFSIHTRREAQDGILQKQLRMFSAFSFQLLRHLQLLSPFGEGKNFAEMAIHSSSGANGTLLFIYLMQKKCFHQLIKSYDTAEQAQLGILEVLANLFTNLRMTPFHERSDNLENVQVTLRGLPSLLKPYVEEYNSTVTGLYKRFMAASSQDGNLFDPSFAVSGKLDSESVSLTEDFLVAPLFDQYSHDESFLPVIDFNKKDHRGRKIQRNAFAYDFYVHGSRNMLMDVNGLHVSVAWFLLHDFAAILERLAIGVHNMARPQDPLVLVLEELHKNYDEKFRKAFGMRTRD.

Disordered stretches follow at residues 47-70 (SVAG…SDDL) and 584-616 (KKTG…KSKK). ATP contacts are provided by residues 607–614 (ATKESGKS) and 806–813 (APTSAGKT). Positions 607 to 616 (ATKESGKSKK) are enriched in basic and acidic residues. One can recognise a Helicase ATP-binding domain in the interval 793 to 963 (LDSVDRGNSA…WLNSSEQAKS (171 aa)). The DEVH box motif lies at 913–916 (DEVH). Positions 1197–1223 (KRKRDDAEKKKKGDKDEDAGPEKDDDE) are disordered. The span at 1199-1218 (KRDDAEKKKKGDKDEDAGPE) shows a compositional bias: basic and acidic residues. One can recognise a Helicase C-terminal domain in the interval 1237-1391 (ALERFKLRGR…NPPFTVLFLL (155 aa)).

Belongs to the helicase family. SKI2 subfamily.

The protein resides in the nucleus. This is an uncharacterized protein from Caenorhabditis elegans.